Consider the following 475-residue polypeptide: tRNA-2-methylthio-N(6)-dimethylallyladenosine synthase (475 aa).

Basic and acidic residues predominate over residues Met1–Gly10. Positions Met1–Thr22 are disordered. Residues Gly27–Ala144 enclose the MTTase N-terminal domain. [4Fe-4S] cluster is bound by residues Cys36, Cys73, Cys107, Cys181, Cys185, and Cys188. A Radical SAM core domain is found at Arg167–Ala400. In terms of domain architecture, TRAM spans Gln403–Gly466.

This sequence belongs to the methylthiotransferase family. MiaB subfamily. As to quaternary structure, monomer. The cofactor is [4Fe-4S] cluster.

The protein resides in the cytoplasm. It carries out the reaction N(6)-dimethylallyladenosine(37) in tRNA + (sulfur carrier)-SH + AH2 + 2 S-adenosyl-L-methionine = 2-methylsulfanyl-N(6)-dimethylallyladenosine(37) in tRNA + (sulfur carrier)-H + 5'-deoxyadenosine + L-methionine + A + S-adenosyl-L-homocysteine + 2 H(+). Its function is as follows. Catalyzes the methylthiolation of N6-(dimethylallyl)adenosine (i(6)A), leading to the formation of 2-methylthio-N6-(dimethylallyl)adenosine (ms(2)i(6)A) at position 37 in tRNAs that read codons beginning with uridine. This is tRNA-2-methylthio-N(6)-dimethylallyladenosine synthase from Bordetella bronchiseptica (strain ATCC BAA-588 / NCTC 13252 / RB50) (Alcaligenes bronchisepticus).